A 152-amino-acid chain; its full sequence is Cytochrome c-type biogenesis CcmH-like mitochondrial protein (152 aa).

Residues 1–83 (MATEEDVKQR…ILYTPKFDLQ (83 aa)) lie on the Mitochondrial intermembrane side of the membrane. Heme-binding residues include Cys26 and Cys29. Residues 84 to 104 (TAAIWLSPVIVGGVAAGVWAY) form a helical membrane-spanning segment. The Mitochondrial matrix segment spans residues 105–152 (QKHRQRTNVHIMALNLVRGVPLTPREKETMLDVLTPPPPANKWWWPGK).

This sequence belongs to the CcmH/CycL/Ccl2/NrfF family.

Its subcellular location is the mitochondrion inner membrane. Functionally, plays a role in mitochondrial cytochrome c maturation. Probable component of a heme lyase complex involved in the reduction of apocytochrome c. This chain is Cytochrome c-type biogenesis CcmH-like mitochondrial protein, found in Oryza sativa subsp. japonica (Rice).